Here is a 349-residue protein sequence, read N- to C-terminus: Phenylalanine--tRNA ligase alpha subunit (349 aa).

Position 258 (E258) interacts with Mg(2+).

This sequence belongs to the class-II aminoacyl-tRNA synthetase family. Phe-tRNA synthetase alpha subunit type 1 subfamily. Tetramer of two alpha and two beta subunits. Mg(2+) is required as a cofactor.

The protein localises to the cytoplasm. The enzyme catalyses tRNA(Phe) + L-phenylalanine + ATP = L-phenylalanyl-tRNA(Phe) + AMP + diphosphate + H(+). This Rickettsia felis (strain ATCC VR-1525 / URRWXCal2) (Rickettsia azadi) protein is Phenylalanine--tRNA ligase alpha subunit.